The sequence spans 494 residues: Syntaphilin (494 aa).

The segment at 1-75 (MAMSLPGSRR…GIKPPTPEQY (75 aa)) is disordered. Low complexity predominate over residues 7–49 (GSRRTSAGSRRRTSPPVSVRDAYGTSSLSSSSNSGSYKGSDSS). Residues 79–161 (LQQKEVCIRH…VKNNLIDKDK (83 aa)) adopt a coiled-coil conformation. 2 disordered regions span residues 191–246 (MAKE…SGFA) and 338–398 (CGTD…GQSV). Ser200 and Ser204 each carry phosphoserine. The segment covering 207–217 (RSLTRSSTYTK) has biased composition (polar residues). Residue Thr214 is modified to Phosphothreonine. At Ser219 the chain carries Phosphoserine. Residues 230-246 (GDPSSGSAEDGADSGFA) show a composition bias toward low complexity. Residues 344 to 353 (SGDRCPELDA) show a composition bias toward basic and acidic residues. The helical transmembrane segment at 425 to 444 (YIVDLLAVVVPAVPTVAWLC) threads the bilayer.

As to quaternary structure, binds to STX1A. Interacts with DNM1; this interaction inhibits the binding of DNM1 to AMPH and DNM1-receptor-mediated endocytosis. Brain specific. Found in synapses.

It localises to the membrane. It is found in the synapse. The protein localises to the synaptosome. Functionally, inhibits SNARE complex formation by absorbing free STX1A. The sequence is that of Syntaphilin from Homo sapiens (Human).